Here is a 347-residue protein sequence, read N- to C-terminus: Fructose-1,6-bisphosphatase (347 aa).

AMP contacts are provided by residues 19 to 23 (ILQEQ) and 44 to 48 (SGELS). Positions 85 and 114 each coordinate Mg(2+). AMP is bound at residue 127 to 128 (SY). Residues D133, I135, and D136 each contribute to the Mg(2+) site. Substrate is bound at residue 136–139 (DGSS). K155 provides a ligand contact to AMP. Substrate-binding positions include 227–230 (NEGY), 258–263 (RYIGSM), Y279, and 288–290 (KLR). E294 is a Mg(2+) binding site.

This sequence belongs to the FBPase class 1 family. In terms of assembly, homotetramer. It depends on Mg(2+) as a cofactor.

It carries out the reaction beta-D-fructose 1,6-bisphosphate + H2O = beta-D-fructose 6-phosphate + phosphate. It functions in the pathway carbohydrate biosynthesis; gluconeogenesis. With respect to regulation, subject to complex allosteric regulation. The enzyme can assume an active R-state, or an inactive T-state. Intermediate conformations may exist. AMP acts as allosteric inhibitor. AMP binding affects the turnover of bound substrate and not the affinity for substrate. The protein is Fructose-1,6-bisphosphatase (fbp1) of Schizosaccharomyces pombe (strain 972 / ATCC 24843) (Fission yeast).